An 860-amino-acid chain; its full sequence is Alanine--tRNA ligase (860 aa).

Zn(2+) contacts are provided by H553, H557, C655, and H659.

Belongs to the class-II aminoacyl-tRNA synthetase family. The cofactor is Zn(2+).

Its subcellular location is the cytoplasm. The catalysed reaction is tRNA(Ala) + L-alanine + ATP = L-alanyl-tRNA(Ala) + AMP + diphosphate. Its function is as follows. Catalyzes the attachment of alanine to tRNA(Ala) in a two-step reaction: alanine is first activated by ATP to form Ala-AMP and then transferred to the acceptor end of tRNA(Ala). Also edits incorrectly charged Ser-tRNA(Ala) and Gly-tRNA(Ala) via its editing domain. This is Alanine--tRNA ligase from Legionella pneumophila (strain Paris).